Consider the following 239-residue polypeptide: tRNA (guanine-N(1)-)-methyltransferase (239 aa).

S-adenosyl-L-methionine is bound by residues glycine 109 and 128–133 (IGDYVL).

The protein belongs to the RNA methyltransferase TrmD family. As to quaternary structure, homodimer.

The protein localises to the cytoplasm. It catalyses the reaction guanosine(37) in tRNA + S-adenosyl-L-methionine = N(1)-methylguanosine(37) in tRNA + S-adenosyl-L-homocysteine + H(+). In terms of biological role, specifically methylates guanosine-37 in various tRNAs. This Thermus thermophilus (strain ATCC BAA-163 / DSM 7039 / HB27) protein is tRNA (guanine-N(1)-)-methyltransferase.